The chain runs to 338 residues: Homoserine kinase (338 aa).

The protein belongs to the GHMP kinase family. Homoserine kinase subfamily.

It catalyses the reaction L-homoserine + ATP = O-phospho-L-homoserine + ADP + H(+). It participates in amino-acid biosynthesis; L-threonine biosynthesis; L-threonine from L-aspartate: step 4/5. Its function is as follows. Commits homoserine to the threonine biosynthesis pathway by catalyzing its O-phosphorylation. In Schizosaccharomyces pombe (strain 972 / ATCC 24843) (Fission yeast), this protein is Homoserine kinase.